Reading from the N-terminus, the 312-residue chain is Olfactory receptor 2M7 (312 aa).

Residues 1–25 (MAWENQTFNSDFLLLGIFNHSPTHT) are Extracellular-facing. Asparagine 5 carries an N-linked (GlcNAc...) asparagine glycan. The chain crosses the membrane as a helical span at residues 26-49 (FLFFLVLAIFSVAFMGNSIMVLLI). Over 50–57 (YLDTQLHT) the chain is Cytoplasmic. Residues 58–79 (PMYFLLSQLSLMDLMLICTTVP) traverse the membrane as a helical segment. At 80-100 (KMAFNYLSGSKSISMAGCATQ) the chain is on the extracellular side. Residues cysteine 97 and cysteine 189 are joined by a disulfide bond. A helical membrane pass occupies residues 101–120 (IFFYISLLGSECFLLAVMSY). The Cytoplasmic portion of the chain corresponds to 121–139 (DRYTAICHPLRYTNLMRPK). Residues 140–158 (ICGLMTAFSWILGSTDGII) traverse the membrane as a helical segment. The Extracellular portion of the chain corresponds to 159–195 (DAVATFSFSYCGSREIAHFCCDFPSLLILSCNDTSIF). The helical transmembrane segment at 196 to 219 (EEVIFICCIVMLVFPVAIIITSYA) threads the bilayer. Residues 220-236 (RVILAVIHMGSGEGRRK) are Cytoplasmic-facing. The chain crosses the membrane as a helical span at residues 237-259 (AFTTCSSHLMVVGMYYGAGLFMC). Topologically, residues 260–272 (IQPTSHHSPMQDK) are extracellular. Residues 273–292 (MVSVFYTIVTPMLNPLIYSL) form a helical membrane-spanning segment. Over 293 to 311 (RNKEVTRALMKILGKGKSG) the chain is Cytoplasmic.

It belongs to the G-protein coupled receptor 1 family.

It localises to the cell membrane. Its function is as follows. Odorant receptor. This Homo sapiens (Human) protein is Olfactory receptor 2M7 (OR2M7).